A 331-amino-acid chain; its full sequence is Lactamase-like protein nscB (331 aa).

The Zn(2+) site is built by His-106, His-108, Asp-110, and His-111. The active-site Proton donor/acceptor is Asp-110.

It belongs to the metallo-beta-lactamase superfamily. It depends on Zn(2+) as a cofactor.

Its pathway is secondary metabolite biosynthesis. Lactamase-like protein; part of the gene cluster that mediates the biosynthesis of neosartoricin B, a prenylated anthracenone that probably exhibits T-cell antiproliferative activity, suggestive of a physiological role as an immunosuppressive agent. The non-reducing polyketide synthase nscA probably synthesizes and cyclizes the decaketide backbone. The hydrolase nscB then mediates the product release through hydrolysis followed by spontaneous decarboxylation. The prenyltransferase nscD catalyzes the addition of the dimethylallyl group to the aromatic C5. The FAD-dependent monooxygenase nscC is then responsible for the stereospecific hydroxylation at C2. Neosartoricin B can be converted into two additional compounds neosartoricins C and D. Neosartoricin C is a spirocyclic compound that is cyclized through the attack of C3 hydroxyl on C14, followed by dehydration. On the other hand, neosartoricin D is a further cyclized compound in which attack of C2 on C14 in neosartoricin C results in the formation of the acetal-containing dioxabicyclo-octanone ring. Both of these compounds are novel and possibly represent related metabolites of the gene cluster. The chain is Lactamase-like protein nscB from Trichophyton equinum (strain ATCC MYA-4606 / CBS 127.97) (Horse ringworm fungus).